A 261-amino-acid polypeptide reads, in one-letter code: Probable RNA-binding protein ARP1 (261 aa).

An RRM domain is found at 17-94 (TKVFVGGLAW…RRANCNLASL (78 aa)). Residues 96-122 (GRLRKSPTMTSPQQGPKNGNRATPPHV) form a disordered region. Residues 102-116 (PTMTSPQQGPKNGNR) show a composition bias toward polar residues.

In terms of tissue distribution, expressed in vasculature of leaves, roots and siliques.

Its subcellular location is the nucleus. Functionally, probable RNA-binding protein involved in the regulation of abscisic acid (ABA) response during seed germination. May regulate transcript levels of several germination-responsive genes under ABA. The protein is Probable RNA-binding protein ARP1 of Arabidopsis thaliana (Mouse-ear cress).